The following is a 533-amino-acid chain: Fimbrial subunit type 1 (533 aa).

The N-terminal stretch at 1 to 30 (MHSLNTRRGLGLAAAMTLAAGALVAPTGAA) is a signal peptide. Residues 496–500 (LPLTG) carry the LPXTG sorting signal motif. Residue T499 is modified to Pentaglycyl murein peptidoglycan amidated threonine. Residues 500–533 (GANGVIFLTIAGALLVAGGAVVAYANKRRHVAKH) constitute a propeptide, removed by sortase.

It localises to the secreted. The protein localises to the cell wall. The protein resides in the fimbrium. Its function is as follows. Major fimbrial subunit of A.viscosus. This Actinomyces viscosus protein is Fimbrial subunit type 1.